The following is a 278-amino-acid chain: 4-deoxy-L-threo-5-hexosulose-uronate ketol-isomerase (278 aa).

Zn(2+) is bound by residues histidine 196, histidine 198, glutamate 203, and histidine 245.

Belongs to the KduI family. Zn(2+) is required as a cofactor.

It catalyses the reaction 5-dehydro-4-deoxy-D-glucuronate = 3-deoxy-D-glycero-2,5-hexodiulosonate. The protein operates within glycan metabolism; pectin degradation; 2-dehydro-3-deoxy-D-gluconate from pectin: step 4/5. Its function is as follows. Catalyzes the isomerization of 5-dehydro-4-deoxy-D-glucuronate to 3-deoxy-D-glycero-2,5-hexodiulosonate. This is 4-deoxy-L-threo-5-hexosulose-uronate ketol-isomerase from Yersinia pestis bv. Antiqua (strain Antiqua).